We begin with the raw amino-acid sequence, 447 residues long: Neuronal acetylcholine receptor subunit alpha-10 (447 aa).

Positions 1-24 (MGTRSHYLDLGFLLLLFLPAECLG) are cleaved as a signal peptide. Residues 25 to 237 (AEGRLAHKLF…FTLLLRRRAA (213 aa)) lie on the Extracellular side of the membrane. N-linked (GlcNAc...) asparagine glycosylation is found at asparagine 40 and asparagine 56. Cystine bridges form between cysteine 154/cysteine 168 and cysteine 218/cysteine 219. 3 consecutive transmembrane segments (helical) span residues 238-258 (AYVC…PLAF), 268-288 (VSLG…LAES), and 302-322 (YMAT…IMNL). At 323 to 425 (HYCGPNAHPV…WKRLARVMDR (103 aa)) the chain is on the cytoplasmic side. Residues 426-446 (FFLGIFFCMALVMSLIVLVQA) traverse the membrane as a helical segment.

This sequence belongs to the ligand-gated ion channel (TC 1.A.9) family. Acetylcholine receptor (TC 1.A.9.1) subfamily. Alpha-10/CHRNA10 sub-subfamily. In terms of assembly, forms homo- or heterooligomeric channels in conjunction with CHRNA10. The native outer hair cell receptor may be composed of CHRNA9:CHRNA10 heterooligomers. Found in the stoichiometric form (CHRNA9)2:(CHRNA10)3. In terms of tissue distribution, expressed in the outer hair cells of the cochlea and the neurons of dorsal root ganglia.

Its subcellular location is the synaptic cell membrane. It localises to the cell membrane. It catalyses the reaction Ca(2+)(in) = Ca(2+)(out). It carries out the reaction Mg(2+)(in) = Mg(2+)(out). The catalysed reaction is K(+)(in) = K(+)(out). The enzyme catalyses Na(+)(in) = Na(+)(out). With respect to regulation, activated by a myriad of ligands such as acetylcholine. AChR activity is inhibited by the antagonist alpha-conotoxins RgIA and GeXXA, small disulfide-constrained peptides from cone snails. Component of neuronal acetylcholine receptors (nAChRs) that function as pentameric, ligand-gated cation channels with high calcium permeability among other activities. nAChRs are excitatory neurotrasnmitter receptors formed by a collection of nAChR subunits known to mediate synaptic transmission in the nervous system and the neuromuscular junction. Each nAchR subunit confers differential attributes to channel properties, including activation, deactivation and desensitization kinetics, pH sensitivity, cation permeability, and binding to allosteric modulators. Forms heteropentamers with CHRNA9. Expressed in the inner ear, in sympathetic neurons and in other non-neuronal cells, such as skin keratinocytes and lymphocytes. nAChR formed by CHRNA9:CHRNA10 mediate central nervous system control of auditory and vestibular sensory processing. The channel is permeable to a range of divalent cations including calcium, the influx of which may activate a potassium current which hyperpolarizes the cell membrane. In the ear, mediates synaptic transmission between efferent olivocochlear fibers and hair cells of the cochlea, this may lead to a reduction in basilar membrane motion, altering the activity of auditory nerve fibers and reducing the range of dynamic hearing. This may protect against acoustic trauma. May also regulate keratinocyte adhesion. This is Neuronal acetylcholine receptor subunit alpha-10 (Chrna10) from Rattus norvegicus (Rat).